The following is a 1282-amino-acid chain: Trafficking protein particle complex subunit 8 (1282 aa).

Residues 245–287 (TDAIAPGPNGASNQQSPSSPTSSVATISSTMPAVGSVSPNSHP) form a disordered region. Residues 255–273 (ASNQQSPSSPTSSVATISS) are compositionally biased toward low complexity.

Its function is as follows. Plays a role in endoplasmic reticulum to Golgi apparatus trafficking at a very early stage. Involved in collagen secretion. The chain is Trafficking protein particle complex subunit 8 from Caenorhabditis elegans.